Here is a 281-residue protein sequence, read N- to C-terminus: Pantothenate synthetase (281 aa).

31–38 (MGNLHAGH) contacts ATP. The active-site Proton donor is His-38. Residue Gln-62 coordinates (R)-pantoate. A beta-alanine-binding site is contributed by Gln-62. ATP is bound at residue 150-153 (GKKD). Gln-156 lines the (R)-pantoate pocket. Residues Val-179 and 187 to 190 (MSSR) contribute to the ATP site.

The protein belongs to the pantothenate synthetase family. Homodimer.

It is found in the cytoplasm. It carries out the reaction (R)-pantoate + beta-alanine + ATP = (R)-pantothenate + AMP + diphosphate + H(+). It functions in the pathway cofactor biosynthesis; (R)-pantothenate biosynthesis; (R)-pantothenate from (R)-pantoate and beta-alanine: step 1/1. Its function is as follows. Catalyzes the condensation of pantoate with beta-alanine in an ATP-dependent reaction via a pantoyl-adenylate intermediate. The polypeptide is Pantothenate synthetase (Xylella fastidiosa (strain M12)).